The chain runs to 191 residues: MAPNVALADSMHNYQPKPGKRNQEASELRKTLKPLMEKRRRARINESLNQLKTLILPLIGKDNSRYSKLEKADILEMTVRFLRDIPPVQAQNQADRYKEGYRACVERLSAILGKSHVLTGEASNRLLEYLQRSPELCSSDCNHPPKPQRPRIVLQVSPRTSQFGSPLQNQPSSHRPAPCPPQLNSSIWRPW.

A disordered region spans residues 1–26; the sequence is MAPNVALADSMHNYQPKPGKRNQEAS. Positions 28-85 constitute a bHLH domain; that stretch reads LRKTLKPLMEKRRRARINESLNQLKTLILPLIGKDNSRYSKLEKADILEMTVRFLRDI. Positions 97 to 130 constitute an Orange domain; the sequence is YKEGYRACVERLSAILGKSHVLTGEASNRLLEYL. 2 stretches are compositionally biased toward polar residues: residues 159 to 173 and 182 to 191; these read RTSQFGSPLQNQPSS and QLNSSIWRPW. The tract at residues 159–191 is disordered; sequence RTSQFGSPLQNQPSSHRPAPCPPQLNSSIWRPW. The WRPW motif signature appears at 188–191; sequence WRPW.

In terms of assembly, transcription repression requires formation of a complex with a corepressor protein of the Groucho/TLE family. Homodimer, and heterodimer with the other bHLH proteins neurod1, neurod4/ath3, hes1/hairy1 and hes6r. Weakly interacts with the bHLH protein hey1/hrt1. Expressed in the animal half of the early cleavage stage embryo. During neurulation and organogenesis, the otic vesicles and retina are the main sites of expression; expression in otic placodes begins as early as stage 13.5, persisting in the otic vesicles at stage 30 and beyond. Also transiently expressed in the olfactory placodes. In addition, weakly expressed in primary neurons. Expression in the retina begins at stage 21, and is seen throughout the neural retina by stage 30. From stage 35 onwards, expression progressively declines in the central retina, while remaining high in the margins. At stage 41, expression becomes restricted to the ciliary marginal zone (CMZ) of the retina, the only region where retinogenesis is still occurring.

It is found in the nucleus. In terms of biological role, transcriptional repressor. Essential in the retina to govern glial versus neuronal differentiation. Promotes gliogenesis through the inhibition of neuronal differentiation by at least two distinct mechanisms; represses proneural gene transcription, and also physically interacts with proneural proteins, including neurod1. The polypeptide is Transcription factor HES-2 (hes2) (Xenopus laevis (African clawed frog)).